Consider the following 943-residue polypeptide: MSQDYKTTLHLPATDFPMRGDLPKREPAILERWERDDFYAQLRAHAKGRPLFLLHDGPPYANGQIHLGHAVNKILKDIIIKSKHLDGFDAPYIPGWDCHGLPIEIAIEKKYGKVGVTLDAVQFRQKCREYAAEQIQLQRRDFKRLGVIGDWDAPYKTLDFRFEADEIRALAKIVDKGHLIRGTKPVHWCFDCGSALAEAEIEYTDKTSPMVDVAYPALDPSALAAVFNATLPPDVQLAVPIWTTTPWTLPASLAISVGPTLDYVLVEGPTHSGQRRWLILAEALAAKALARYGIAELLIHGSAKGAAMEQHILAHPFYPDRTIPLLLGNHVSAEDGTGAVHTAPGHGQEDHQVFQQYGLLNRYSAAELNPVDARGVYLSTTPPLGELTLAGLHIWKANPLIVDALRLRGVLLAAAEMHHSYPHCWRHKTPIVFRATPQWFISMEQAALRSAALKAITHVTWYPQWGQARILSMIENRPDWTISRQRTWGVPIPLFVHRHSGAPHPRSAALMRQIADRVEQQGVDIWYSLDQTELLGTEADQYEKITDILDVWFDSGITHEAVLLERGLPKPADLYLEGADQHRGWFQSSLLTGVAMDNAAPYKQCLTHGFTVDQHGRKMSKSLGNGIEPQDIIKTLGADILRLWIASTDYSNEMSLSQEILKRTTDAYRRIRNTTRFLLGNLHGFDPTLHLVPLSDMIALDRWIVHRAFELQQTIKAAYTRYDFAEIIQKILNFCSVDLGSLYLDVTKDRLYTMHENAPGRRSAQTAMYHLTAAFVRWIAPILSFTADELWSYLPGDHADNVLFTTWYDGLAPLPPNAPLTAADFDKLLTLRDHVTKVLEPMRANGVIGAALEAEITVAADADTAARWQPLTEELRFLFITGDVTVTPANTDGFFVSAQATTKAKCARCWHYRADIGAHPTHPELCGRCITNVDGPGEQRHWF.

The short motif at 59 to 69 is the 'HIGH' region element; it reads PYANGQIHLGH. An L-isoleucyl-5'-AMP-binding site is contributed by Glu577. The 'KMSKS' region motif lies at 618-622; it reads KMSKS. Lys621 serves as a coordination point for ATP. The Zn(2+) site is built by Cys906, Cys909, Cys926, and Cys929.

It belongs to the class-I aminoacyl-tRNA synthetase family. IleS type 1 subfamily. As to quaternary structure, monomer. It depends on Zn(2+) as a cofactor.

The protein localises to the cytoplasm. The catalysed reaction is tRNA(Ile) + L-isoleucine + ATP = L-isoleucyl-tRNA(Ile) + AMP + diphosphate. Catalyzes the attachment of isoleucine to tRNA(Ile). As IleRS can inadvertently accommodate and process structurally similar amino acids such as valine, to avoid such errors it has two additional distinct tRNA(Ile)-dependent editing activities. One activity is designated as 'pretransfer' editing and involves the hydrolysis of activated Val-AMP. The other activity is designated 'posttransfer' editing and involves deacylation of mischarged Val-tRNA(Ile). This chain is Isoleucine--tRNA ligase, found in Xylella fastidiosa (strain M12).